The primary structure comprises 1143 residues: DNA polymerase II large subunit (1143 aa).

This sequence belongs to the archaeal DNA polymerase II family. Heterodimer of a large subunit and a small subunit.

It carries out the reaction DNA(n) + a 2'-deoxyribonucleoside 5'-triphosphate = DNA(n+1) + diphosphate. The catalysed reaction is Exonucleolytic cleavage in the 3'- to 5'-direction to yield nucleoside 5'-phosphates.. Possesses two activities: a DNA synthesis (polymerase) and an exonucleolytic activity that degrades single-stranded DNA in the 3'- to 5'-direction. Has a template-primer preference which is characteristic of a replicative DNA polymerase. The chain is DNA polymerase II large subunit (polC) from Archaeoglobus fulgidus (strain ATCC 49558 / DSM 4304 / JCM 9628 / NBRC 100126 / VC-16).